Here is a 609-residue protein sequence, read N- to C-terminus: Proteasome-associated ATPase (609 aa).

Positions 1 to 27 (MGSSERSEAFGTPRESDMSSGDEAELE) are disordered. Residues 17–96 (DMSSGDEAEL…LREEVDRLGQ (80 aa)) adopt a coiled-coil conformation. 296–301 (GCGKTL) is an ATP binding site. Positions 608 to 609 (YL) are docks into pockets in the proteasome alpha-ring.

This sequence belongs to the AAA ATPase family. As to quaternary structure, homohexamer. Assembles into a hexameric ring structure that caps the 20S proteasome core. Strongly interacts with the prokaryotic ubiquitin-like protein Pup through a hydrophobic interface; the interacting region of ARC lies in its N-terminal coiled-coil domain. There is one Pup binding site per ARC hexamer ring. Upon ATP-binding, the C-terminus of ARC interacts with the alpha-rings of the proteasome core, possibly by binding to the intersubunit pockets.

The protein operates within protein degradation; proteasomal Pup-dependent pathway. In terms of biological role, ATPase which is responsible for recognizing, binding, unfolding and translocation of pupylated proteins into the bacterial 20S proteasome core particle. May be essential for opening the gate of the 20S proteasome via an interaction with its C-terminus, thereby allowing substrate entry and access to the site of proteolysis. Thus, the C-termini of the proteasomal ATPase may function like a 'key in a lock' to induce gate opening and therefore regulate proteolysis. This Mycobacterium avium (strain 104) protein is Proteasome-associated ATPase.